Here is a 390-residue protein sequence, read N- to C-terminus: MADRHTGTHGHVPVMLERMVELIAPTVTESSENSAPSVILDGTLGAGGHTESFLERFPSAMVIGVDRDKKELSRTTERLSRFQDRFYPVHARFDNFDEALDDADHPVVDAFDAHGLSAGFFDLGVSSMQLDQVDRGFTYRDDGPLDMRMDTSTGKTAADVLNTYSHGELARILKTYGDERFAGPLARAIVREREKEPWSTSQRLVDLIYATIPASARRHGGHPAKRTFQALRVEVNAELDALRRVIPKVCSYLHLGGRAVFMSYQSLEDKIVKRELAALTESKTPPGLPIDLPNSAPDFHLVTRGSEKADEQENNKNPRAHSVRVRAVERTGYSHSSPPPGSTPARASGSSTTYSARSGSRHEAHREGREHLVSSAQQSISHREDVEGEQ.

S-adenosyl-L-methionine is bound by residues 47–49, aspartate 66, phenylalanine 93, aspartate 122, and glutamine 129; that span reads GGH. The tract at residues 282–390 is disordered; the sequence is SKTPPGLPID…SHREDVEGEQ (109 aa). Residues 305–316 are compositionally biased toward basic and acidic residues; sequence GSEKADEQENNK. A compositionally biased stretch (polar residues) spans 348–358; sequence SGSSTTYSARS. 2 stretches are compositionally biased toward basic and acidic residues: residues 360-372 and 381-390; these read SRHEAHREGREHL and SHREDVEGEQ.

The protein belongs to the methyltransferase superfamily. RsmH family.

The protein localises to the cytoplasm. It carries out the reaction cytidine(1402) in 16S rRNA + S-adenosyl-L-methionine = N(4)-methylcytidine(1402) in 16S rRNA + S-adenosyl-L-homocysteine + H(+). Functionally, specifically methylates the N4 position of cytidine in position 1402 (C1402) of 16S rRNA. The chain is Ribosomal RNA small subunit methyltransferase H from Corynebacterium kroppenstedtii (strain DSM 44385 / JCM 11950 / CIP 105744 / CCUG 35717).